A 177-amino-acid chain; its full sequence is Chorismate pyruvate-lyase (177 aa).

Positions 37, 79, 117, and 159 each coordinate substrate.

Belongs to the UbiC family. In terms of assembly, monomer.

It is found in the cytoplasm. The catalysed reaction is chorismate = 4-hydroxybenzoate + pyruvate. It functions in the pathway cofactor biosynthesis; ubiquinone biosynthesis. In terms of biological role, removes the pyruvyl group from chorismate, with concomitant aromatization of the ring, to provide 4-hydroxybenzoate (4HB) for the ubiquinone pathway. In Sodalis glossinidius (strain morsitans), this protein is Chorismate pyruvate-lyase.